The primary structure comprises 426 residues: 3-isopropylmalate dehydratase large subunit (426 aa).

[4Fe-4S] cluster contacts are provided by C307, C367, and C370.

Belongs to the aconitase/IPM isomerase family. LeuC type 2 subfamily. Heterodimer of LeuC and LeuD. It depends on [4Fe-4S] cluster as a cofactor.

The enzyme catalyses (2R,3S)-3-isopropylmalate = (2S)-2-isopropylmalate. Its pathway is amino-acid biosynthesis; L-leucine biosynthesis; L-leucine from 3-methyl-2-oxobutanoate: step 2/4. Its function is as follows. Catalyzes the isomerization between 2-isopropylmalate and 3-isopropylmalate, via the formation of 2-isopropylmaleate. In Aliarcobacter butzleri (strain RM4018) (Arcobacter butzleri), this protein is 3-isopropylmalate dehydratase large subunit.